The chain runs to 174 residues: 3-hydroxydecanoyl-[acyl-carrier-protein] dehydratase (174 aa).

His73 is a catalytic residue.

It belongs to the thioester dehydratase family. FabA subfamily. Homodimer.

The protein resides in the cytoplasm. The enzyme catalyses a (3R)-hydroxyacyl-[ACP] = a (2E)-enoyl-[ACP] + H2O. The catalysed reaction is (3R)-hydroxydecanoyl-[ACP] = (2E)-decenoyl-[ACP] + H2O. It carries out the reaction (2E)-decenoyl-[ACP] = (3Z)-decenoyl-[ACP]. It participates in lipid metabolism; fatty acid biosynthesis. Necessary for the introduction of cis unsaturation into fatty acids. Catalyzes the dehydration of (3R)-3-hydroxydecanoyl-ACP to E-(2)-decenoyl-ACP and then its isomerization to Z-(3)-decenoyl-ACP. Can catalyze the dehydratase reaction for beta-hydroxyacyl-ACPs with saturated chain lengths up to 16:0, being most active on intermediate chain length. The sequence is that of 3-hydroxydecanoyl-[acyl-carrier-protein] dehydratase from Cellvibrio japonicus (strain Ueda107) (Pseudomonas fluorescens subsp. cellulosa).